Reading from the N-terminus, the 935-residue chain is Bifunctional alpha-galactosidase/sucrose kinase AgaSK (935 aa).

An alpha-galactosidase region spans residues 1–720 (MAIIYNPNKK…EAYQFAFTEL (720 aa)). Glutamate 176, glutamate 277, and phenylalanine 280 together coordinate Mg(2+). Substrate is bound by residues 366–367 (DD), arginine 443, 476–480 (KWDMN), and 518–521 (CSGG). The active-site Nucleophile is aspartate 526. Position 540 (aspartate 540) interacts with substrate. The active-site Proton donor/acceptor is glutamate 606. Positions 721–935 (KEAGRLYEKV…VGKDGSVYEQ (215 aa)) are sucrose kinase. Residues 748 to 752 (GGSGS) and alanine 824 contribute to the ATP site.

In the N-terminal section; belongs to the glycosyl hydrolase 36 family. The protein in the C-terminal section; belongs to the uridine kinase family. Homotetramer. Requires Mg(2+) as cofactor.

It catalyses the reaction Hydrolysis of terminal, non-reducing alpha-D-galactose residues in alpha-D-galactosides, including galactose oligosaccharides, galactomannans and galactolipids.. Functionally, bifunctional enzyme with alpha-galactosidase and sucrose kinase activities. Produces sucrose-6-phosphate directly from raffinose. Binds ATP. Phosphorylates sucrose specifically on the C6 position of glucose in the presence of ATP. Hydrolyzes melibiose, raffinose, stachyose and synthetic substrate p-nitrophenyl-alpha-D-galactopyranoside with high activity. Low activity against locust bean gum, guar gum and synthetic substrates xylose alpha-D-4-nitrophenol, glucose alpha-D-4-nitrophenol and o-nitrophenyl-alpha-D-galactopyranoside. This Mediterraneibacter gnavus (Ruminococcus gnavus) protein is Bifunctional alpha-galactosidase/sucrose kinase AgaSK.